A 90-amino-acid polypeptide reads, in one-letter code: Small ribosomal subunit protein bS16 (90 aa).

It belongs to the bacterial ribosomal protein bS16 family.

This chain is Small ribosomal subunit protein bS16, found in Streptococcus thermophilus (strain CNRZ 1066).